A 252-amino-acid chain; its full sequence is Proteasome subunit alpha type-3 (252 aa).

It belongs to the peptidase T1A family. As to quaternary structure, the 26S proteasome consists of a 20S proteasome core and two 19S regulatory subunits. The 20S proteasome core is composed of 28 subunits that are arranged in four stacked rings, resulting in a barrel-shaped structure. The two end rings are each formed by seven alpha subunits, and the two central rings are each formed by seven beta subunits. The catalytic chamber with the active sites is on the inside of the barrel.

The protein localises to the cytoplasm. It is found in the nucleus. Functionally, the proteasome is a multicatalytic proteinase complex which is characterized by its ability to cleave peptides with Arg, Phe, Tyr, Leu, and Glu adjacent to the leaving group at neutral or slightly basic pH. The proteasome has an ATP-dependent proteolytic activity. The chain is Proteasome subunit alpha type-3 from Acanthamoeba castellanii (Amoeba).